Reading from the N-terminus, the 155-residue chain is SsrA-binding protein (155 aa).

The protein belongs to the SmpB family.

The protein resides in the cytoplasm. Its function is as follows. Required for rescue of stalled ribosomes mediated by trans-translation. Binds to transfer-messenger RNA (tmRNA), required for stable association of tmRNA with ribosomes. tmRNA and SmpB together mimic tRNA shape, replacing the anticodon stem-loop with SmpB. tmRNA is encoded by the ssrA gene; the 2 termini fold to resemble tRNA(Ala) and it encodes a 'tag peptide', a short internal open reading frame. During trans-translation Ala-aminoacylated tmRNA acts like a tRNA, entering the A-site of stalled ribosomes, displacing the stalled mRNA. The ribosome then switches to translate the ORF on the tmRNA; the nascent peptide is terminated with the 'tag peptide' encoded by the tmRNA and targeted for degradation. The ribosome is freed to recommence translation, which seems to be the essential function of trans-translation. The chain is SsrA-binding protein from Bordetella parapertussis (strain 12822 / ATCC BAA-587 / NCTC 13253).